The chain runs to 200 residues: Adenine phosphoribosyltransferase (200 aa).

Belongs to the purine/pyrimidine phosphoribosyltransferase family. As to quaternary structure, homodimer.

It is found in the cytoplasm. It catalyses the reaction AMP + diphosphate = 5-phospho-alpha-D-ribose 1-diphosphate + adenine. The protein operates within purine metabolism; AMP biosynthesis via salvage pathway; AMP from adenine: step 1/1. Catalyzes a salvage reaction resulting in the formation of AMP, that is energically less costly than de novo synthesis. This Sorangium cellulosum (strain So ce56) (Polyangium cellulosum (strain So ce56)) protein is Adenine phosphoribosyltransferase.